Consider the following 137-residue polypeptide: Lysozyme (137 aa).

A signal peptide spans 1 to 18 (MQKLIIFALVVLCVGSEA). Residues 19–137 (KTFTRCGLVH…QGSLPDISSC (119 aa)) form the C-type lysozyme domain. 4 disulfides stabilise this stretch: C24–C137, C45–C127, C79–C93, and C89–C107. Residues E50 and D67 contribute to the active site.

This sequence belongs to the glycosyl hydrolase 22 family.

The enzyme catalyses Hydrolysis of (1-&gt;4)-beta-linkages between N-acetylmuramic acid and N-acetyl-D-glucosamine residues in a peptidoglycan and between N-acetyl-D-glucosamine residues in chitodextrins.. Lysozymes have primarily a bacteriolytic function; those in tissues and body fluids are associated with the monocyte-macrophage system and enhance the activity of immunoagents. Active against E.coli and M.luteus. This Bombyx mori (Silk moth) protein is Lysozyme.